The sequence spans 494 residues: NADPH:adrenodoxin oxidoreductase, mitochondrial (494 aa).

The transit peptide at 1–34 directs the protein to the mitochondrion; it reads MAPRCWRWWSWSAWPGVRPLPSRSTPTPGFCKKF. Residues Ala-51, Glu-72, Leu-80, and Val-116 each coordinate FAD. Residues 187–190, 231–232, and Glu-243 contribute to the NADP(+) site; these read QGNV and RR. Position 313 is a phosphoserine (Ser-313). FAD contacts are provided by residues Trp-401 and 408–410; that span reads GVI. Gly-408 is a binding site for NADP(+).

This sequence belongs to the ferredoxin--NADP reductase type 1 family. In terms of assembly, monomer. Interacts directly with FDX1. The cofactor is FAD.

The protein localises to the mitochondrion inner membrane. The catalysed reaction is 2 reduced [adrenodoxin] + NADP(+) + H(+) = 2 oxidized [adrenodoxin] + NADPH. It catalyses the reaction 2 reduced [2Fe-2S]-[ferredoxin] + NADP(+) + H(+) = 2 oxidized [2Fe-2S]-[ferredoxin] + NADPH. It participates in steroid metabolism; cholesterol metabolism. Serves as the first electron transfer protein in all the mitochondrial P450 systems including cholesterol side chain cleavage in all steroidogenic tissues, steroid 11-beta hydroxylation in the adrenal cortex, 25-OH-vitamin D3-24 hydroxylation in the kidney, and sterol C-27 hydroxylation in the liver. Also acts as a ferredoxin--NADP(+) reductase essential for coenzyme Q biosynthesis: together with FDX2, transfers the electrons required for the hydroxylation reaction performed by COQ6. This chain is NADPH:adrenodoxin oxidoreductase, mitochondrial (Fdxr), found in Rattus norvegicus (Rat).